The primary structure comprises 115 residues: Large ribosomal subunit protein uL22 (115 aa).

It belongs to the universal ribosomal protein uL22 family. As to quaternary structure, part of the 50S ribosomal subunit.

Functionally, this protein binds specifically to 23S rRNA; its binding is stimulated by other ribosomal proteins, e.g. L4, L17, and L20. It is important during the early stages of 50S assembly. It makes multiple contacts with different domains of the 23S rRNA in the assembled 50S subunit and ribosome. Its function is as follows. The globular domain of the protein is located near the polypeptide exit tunnel on the outside of the subunit, while an extended beta-hairpin is found that lines the wall of the exit tunnel in the center of the 70S ribosome. In Enterococcus faecalis (strain ATCC 700802 / V583), this protein is Large ribosomal subunit protein uL22.